The sequence spans 160 residues: 6,7-dimethyl-8-ribityllumazine synthase (160 aa).

5-amino-6-(D-ribitylamino)uracil is bound by residues Phe-32, 66-68, and 90-92; these read ALE and CII. A (2S)-2-hydroxy-3-oxobutyl phosphate-binding site is contributed by 95-96; it reads ET. The Proton donor role is filled by His-98. Residue Asn-123 coordinates 5-amino-6-(D-ribitylamino)uracil. Residue Arg-137 coordinates (2S)-2-hydroxy-3-oxobutyl phosphate.

The protein belongs to the DMRL synthase family.

It catalyses the reaction (2S)-2-hydroxy-3-oxobutyl phosphate + 5-amino-6-(D-ribitylamino)uracil = 6,7-dimethyl-8-(1-D-ribityl)lumazine + phosphate + 2 H2O + H(+). It functions in the pathway cofactor biosynthesis; riboflavin biosynthesis; riboflavin from 2-hydroxy-3-oxobutyl phosphate and 5-amino-6-(D-ribitylamino)uracil: step 1/2. Its function is as follows. Catalyzes the formation of 6,7-dimethyl-8-ribityllumazine by condensation of 5-amino-6-(D-ribitylamino)uracil with 3,4-dihydroxy-2-butanone 4-phosphate. This is the penultimate step in the biosynthesis of riboflavin. The chain is 6,7-dimethyl-8-ribityllumazine synthase from Methylibium petroleiphilum (strain ATCC BAA-1232 / LMG 22953 / PM1).